A 420-amino-acid chain; its full sequence is Protein TabA (420 aa).

Residue K57 is modified to N6-(pyridoxal phosphate)lysine.

Belongs to the Orn/Lys/Arg decarboxylase class-II family. Pyridoxal 5'-phosphate serves as cofactor.

Involved in tabtoxin production and pathogenicity. The polypeptide is Protein TabA (tabA) (Pseudomonas amygdali pv. tabaci (Pseudomonas syringae pv. tabaci)).